Reading from the N-terminus, the 214-residue chain is Adenylate kinase (214 aa).

G10 to T15 lines the ATP pocket. Residues S30–V59 are NMP. Residues T31, R36, K57–V59, G85–R88, and Q92 contribute to the AMP site. The LID stretch occupies residues G122 to D159. ATP-binding positions include R123 and V132 to Y133. AMP contacts are provided by R156 and R167. K200 serves as a coordination point for ATP.

It belongs to the adenylate kinase family. Monomer.

The protein resides in the cytoplasm. The catalysed reaction is AMP + ATP = 2 ADP. The protein operates within purine metabolism; AMP biosynthesis via salvage pathway; AMP from ADP: step 1/1. Its function is as follows. Catalyzes the reversible transfer of the terminal phosphate group between ATP and AMP. Plays an important role in cellular energy homeostasis and in adenine nucleotide metabolism. The protein is Adenylate kinase of Pseudoalteromonas atlantica (strain T6c / ATCC BAA-1087).